The primary structure comprises 72 residues: Multiple antibiotic resistance protein MarB (72 aa).

The protein is Multiple antibiotic resistance protein MarB (marB) of Escherichia coli (strain K12).